The sequence spans 41 residues: Pi-stichotoxin-Hmg5c (41 aa).

3 disulfide bridges follow: Cys4–Cys37, Cys6–Cys30, and Cys20–Cys38.

Belongs to the sea anemone type 3 (BDS) potassium channel toxin family.

It localises to the secreted. It is found in the nematocyst. Functionally, toxin with different activities on acid-sensing ion channels (ASIC) and nicotinic acetylcholine receptors. Is able to bind T.californica muscle-type nicotinic acetylcholine receptors (nAChR) (alpha-1-beta-1-delta-epsilon (CHRNA1-CHRNB1-CHRND-CHRNE)), and human alpha-7/CHRNA7 nicotinic acetylcholine receptors. Weakly and reversibly inhibits rat homomeric ASIC1 (isoform ASIC1a) (IC(50)=1.25 uM), while it potentiates rat homomeric ASIC3 (EC(50)=1.53 uM). Rat ASIC1a current inhibition is not complete, and reaches a maximum of 86% inhibition. On rat ASIC3, does not activate the channel itself, but produces a remarkable potentiation of the transient current resulting from the acidic pulse. At the maximal applied concentration, elicits responses that are twice as high as those produced by extracellular protons. Surprisingly, shows a different activity on human ASIC3. On the truncated human ASIC3 (ASIC3-D20), the toxin weakly inhibits the channel. Molecular modeling interaction with rat ASIC1a suggests that it hinders the collapse of acidic pockets and stabilizes nonconducting channels state. In vivo, causes an anxiolytic effect on mouse behavior. Also shows an analgesic activity in an acid-induced muscle pain model, and important anti-inflammatory effect in models of acute local inflammation. The sequence is that of Pi-stichotoxin-Hmg5c from Heteractis magnifica (Magnificent sea anemone).